A 296-amino-acid chain; its full sequence is Protoheme IX farnesyltransferase (296 aa).

9 helical membrane-spanning segments follow: residues 9 to 29, 36 to 56, 84 to 104, 108 to 128, 133 to 153, 163 to 183, 209 to 229, 234 to 254, and 265 to 285; these read VTKPGIIFGNLISVIGGFLLA, YPLFIYTLVGVSLVVASGCVF, AVSLVYATLLGIAGFMLLWFG, LACWLGVMGFVVYVGIYSLYM, VYGTLIGSLSGAAPPVIGYCA, LILLAIFSLWQMPHSYAIAIF, ITLYIIAFAVATLMLSLGGYA, LVVAAAVSVWWLGMALRGYKV, and FGFSIIAITALSVMMSVDFMV.

It belongs to the UbiA prenyltransferase family. Protoheme IX farnesyltransferase subfamily.

The protein resides in the cell inner membrane. It carries out the reaction heme b + (2E,6E)-farnesyl diphosphate + H2O = Fe(II)-heme o + diphosphate. The protein operates within porphyrin-containing compound metabolism; heme O biosynthesis; heme O from protoheme: step 1/1. In terms of biological role, converts heme B (protoheme IX) to heme O by substitution of the vinyl group on carbon 2 of heme B porphyrin ring with a hydroxyethyl farnesyl side group. This is Protoheme IX farnesyltransferase from Citrobacter koseri (strain ATCC BAA-895 / CDC 4225-83 / SGSC4696).